A 282-amino-acid polypeptide reads, in one-letter code: Formamidopyrimidine-DNA glycosylase (282 aa).

P2 acts as the Schiff-base intermediate with DNA in catalysis. E3 acts as the Proton donor in catalysis. K61 acts as the Proton donor; for beta-elimination activity in catalysis. Positions 93, 112, and 158 each coordinate DNA. The FPG-type zinc finger occupies 244 to 278 (DAYGREGEGCRRCGAVMHREKFMNRSSFYCPRCQP). R268 serves as the catalytic Proton donor; for delta-elimination activity.

The protein belongs to the FPG family. In terms of assembly, monomer. The cofactor is Zn(2+).

The enzyme catalyses Hydrolysis of DNA containing ring-opened 7-methylguanine residues, releasing 2,6-diamino-4-hydroxy-5-(N-methyl)formamidopyrimidine.. It carries out the reaction 2'-deoxyribonucleotide-(2'-deoxyribose 5'-phosphate)-2'-deoxyribonucleotide-DNA = a 3'-end 2'-deoxyribonucleotide-(2,3-dehydro-2,3-deoxyribose 5'-phosphate)-DNA + a 5'-end 5'-phospho-2'-deoxyribonucleoside-DNA + H(+). Involved in base excision repair of DNA damaged by oxidation or by mutagenic agents. Acts as a DNA glycosylase that recognizes and removes damaged bases. Has a preference for oxidized purines, such as 7,8-dihydro-8-oxoguanine (8-oxoG). Has AP (apurinic/apyrimidinic) lyase activity and introduces nicks in the DNA strand. Cleaves the DNA backbone by beta-delta elimination to generate a single-strand break at the site of the removed base with both 3'- and 5'-phosphates. This chain is Formamidopyrimidine-DNA glycosylase, found in Mycobacterium leprae (strain Br4923).